The primary structure comprises 417 residues: Fructose-1,6-bisphosphatase 1, chloroplastic (417 aa).

The N-terminal 59 residues, 1-59 (MAATAATTTSSHLLLSSSRHVASSSQPSILSPRSLFSNNGKRAPTGVRNHQYASGVRCM), are a transit peptide targeting the chloroplast. The span at 24–35 (SSQPSILSPRSL) shows a compositional bias: low complexity. The interval 24–48 (SSQPSILSPRSLFSNNGKRAPTGVR) is disordered. Ala60 is modified (N-acetylalanine). 5 residues coordinate Mg(2+): Glu138, Glu167, Asp188, Leu190, and Asp191. 191 to 194 (DGSS) is a binding site for substrate. A disulfide bridge links Cys233 with Cys238. Substrate contacts are provided by Asn297, Tyr329, Tyr347, Tyr349, and Lys359. Glu365 provides a ligand contact to Mg(2+).

Belongs to the FBPase class 1 family. Homotetramer. The cofactor is Mg(2+).

It is found in the plastid. The protein localises to the chloroplast stroma. The enzyme catalyses beta-D-fructose 1,6-bisphosphate + H2O = beta-D-fructose 6-phosphate + phosphate. It participates in carbohydrate biosynthesis; Calvin cycle. Catalyzes the irreversible reaction from fructose-1,6-bisphosphate to fructose-6-phosphate and inorganic phosphate, to regenerate the primary CO(2) acceptor molecule, ribulose-1,5-bisphosphate. Involved in the regulation of photosynthetic electron flow and sucrose synthesis. Its activity is critical for normal plant development and important for the regulation of a wide range of metabolic processes. This chain is Fructose-1,6-bisphosphatase 1, chloroplastic, found in Arabidopsis thaliana (Mouse-ear cress).